A 356-amino-acid chain; its full sequence is Guanine nucleotide-binding protein alpha-2 subunit (356 aa).

Residues 1 to 25 (MGLCQSEEEKVGSQKSRAIDKEIKQ) are disordered. The N-myristoyl glycine moiety is linked to residue Gly-2. The S-palmitoyl cysteine moiety is linked to residue Cys-4. Residues 7 to 25 (EEEKVGSQKSRAIDKEIKQ) are compositionally biased toward basic and acidic residues. Residues 14-338 (QKSRAIDKEI…TDTNQVQKIL (325 aa)) enclose the G-alpha domain. The tract at residues 17–30 (RAIDKEIKQNQSND) is G1 motif. GTP contacts are provided by Gln-25, Gln-27, Ser-28, Asn-29, Asp-30, Val-135, Glu-160, Ala-166, Val-188, Glu-254, Ser-255, Cys-257, and Phe-310. Asn-29 is a Mg(2+) binding site. A G2 motif region spans residues 158 to 166 (FFENLDRIA). Ala-166 contributes to the Mg(2+) binding site. A G3 motif region spans residues 181–190 (RTKTTGIVEV). The interval 250-257 (MRLFESIC) is G4 motif. A G5 motif region spans residues 308–313 (QKFEAL).

The protein belongs to the G-alpha family. G(q) subfamily. In terms of assembly, g proteins are composed of 3 units; alpha, beta and gamma. The alpha chain contains the guanine nucleotide binding site. Mg(2+) is required as a cofactor.

Functionally, guanine nucleotide-binding proteins (G proteins) are involved as modulators or transducers in various transmembrane signaling systems. Involved in behavioral responses to P.aeruginosa by controlling the expression of daf-7, a member of the TGF-beta family, in ASJ sensory neurons. The protein is Guanine nucleotide-binding protein alpha-2 subunit (gpa-2) of Caenorhabditis briggsae.